The primary structure comprises 708 residues: Glutamate--tRNA ligase, cytoplasmic (708 aa).

Interaction with ARC1 stretches follow at residues 106-115 and 141-157; these read NLRTFILGGL and KVDV…EMDP. Residue 205–207 coordinates L-glutamate; sequence RFP. Positions 210-219 match the 'HIGH' region motif; the sequence is PSGYLHIGHA. Residue His215 coordinates ATP. Asp241 lines the L-glutamate pocket. Thr300 carries the post-translational modification Phosphothreonine. Residues 382–386 and Arg400 contribute to the L-glutamate site; that span reads YDFCV. Residues Glu403 and 437-441 contribute to the ATP site; that span reads LLSKR. A 'KMSKS' region motif is present at residues 437 to 441; it reads LLSKR.

It belongs to the class-I aminoacyl-tRNA synthetase family. Glutamate--tRNA ligase type 2 subfamily. As to quaternary structure, component of a yeast aminoacyl-tRNA synthase (aaRS) complex formed by methionyl-tRNA synthase MES1, glutamyl-tRNA synthase GUS1 and the tRNA aminoacylation cofactor ARC1 in a stoichiometric complex. Interacts (via N-ter) with ARC1 (via N-ter). Can also form a stable binary complex with ARC1 that is functional in terms of aminoacylation. ARC1 increases the affinity for cognate tRNAs due to the presence of a tRNA binding domain in the middle and C-terminal part of ARC1.

It is found in the cytoplasm. The protein localises to the mitochondrion. It carries out the reaction tRNA(Glu) + L-glutamate + ATP = L-glutamyl-tRNA(Glu) + AMP + diphosphate. Functionally, catalyzes the attachment of glutamate to tRNA(Glu) in a two-step reaction: glutamate is first activated by ATP to form Glu-AMP and then transferred to the acceptor end of tRNA(Glu). In mitochondria, constitutes the nondiscriminating glutamyl-tRNA synthase that generates the mitochondrial mischarged glutamyl-tRNA(Gln) substrate for the tRNA-dependent amidotransferase (AdT), which generates mitochondrial glutaminyl-tRNA(Gln) by transamidation of glutamyl-tRNA(Gln). This is Glutamate--tRNA ligase, cytoplasmic (GUS1) from Saccharomyces cerevisiae (strain ATCC 204508 / S288c) (Baker's yeast).